We begin with the raw amino-acid sequence, 187 residues long: Homeobox expressed in ES cells 1-B (187 aa).

A DNA-binding region (homeobox) is located at residues 110–169 (GRRPRTAFTRSQIEILENVFRVNSYPGIDVREELASKLALDEDRIQIWFQNRRAKLKRSH).

The protein belongs to the ANF homeobox family. The N-terminus interacts with the LIM 2 domain of zyx. First expressed at a low level in the late blastula stage (stage 9) in most cells of the animal half of the embryo. Following this, predominantly expressed in two zones; the dorsal blastopore lip (Spemann organizer) at the beginning of gastrulation, and subsequently in the anterior part of the neural anlage (the region of future forebrain).

It localises to the nucleus. Functionally, regulates the earliest stages of development of the anterior neural plate. Plays a role in forebrain development by inhibiting the expression of otx2 and pax6 in the rostral region of the anterior neural plate. Necessary for both neural differentiation and neural patterning. Controls Spemann organizer development. May act as a transcriptional repressor. The chain is Homeobox expressed in ES cells 1-B (hesx1-b) from Xenopus laevis (African clawed frog).